A 369-amino-acid chain; its full sequence is Methionine import ATP-binding protein MetN 2 (369 aa).

In terms of domain architecture, ABC transporter spans 33-270 (VRFIGLGKTY…PRHEVTRTLL (238 aa)). 67-74 (GRSGAGKS) is a binding site for ATP.

The protein belongs to the ABC transporter superfamily. Methionine importer (TC 3.A.1.24) family. In terms of assembly, the complex is composed of two ATP-binding proteins (MetN), two transmembrane proteins (MetI) and a solute-binding protein (MetQ).

It is found in the cell inner membrane. The enzyme catalyses L-methionine(out) + ATP + H2O = L-methionine(in) + ADP + phosphate + H(+). The catalysed reaction is D-methionine(out) + ATP + H2O = D-methionine(in) + ADP + phosphate + H(+). In terms of biological role, part of the ABC transporter complex MetNIQ involved in methionine import. Responsible for energy coupling to the transport system. The chain is Methionine import ATP-binding protein MetN 2 from Pseudomonas putida (strain ATCC 47054 / DSM 6125 / CFBP 8728 / NCIMB 11950 / KT2440).